A 219-amino-acid polypeptide reads, in one-letter code: MMDEKELYEKWMRTVEMLKAEGIIRSKEVERAFLKYPRYLFVEDKYKKYAHIDEPLPIPAGQTVSAPHMVAIMLEIANLKPGMNILEVGTGSGWNAALISEIVKTDVYTIERIPELVEFAKRNLERAGVKNVHVILGDGSKGFPPKAPYDVIIVTAGAPKIPEPLIEQLKIGGKLIIPVGSYHLWQELLEVRKTKDGIKIKNHGGVAFVPLIGEYGWKE.

Ser65 is a catalytic residue.

It belongs to the methyltransferase superfamily. L-isoaspartyl/D-aspartyl protein methyltransferase family. Monomer.

It is found in the cytoplasm. It carries out the reaction [protein]-L-isoaspartate + S-adenosyl-L-methionine = [protein]-L-isoaspartate alpha-methyl ester + S-adenosyl-L-homocysteine. Functionally, catalyzes the methyl esterification of L-isoaspartyl residues in peptides and proteins that result from spontaneous decomposition of normal L-aspartyl and L-asparaginyl residues. It plays a role in the repair and/or degradation of damaged proteins. The chain is Protein-L-isoaspartate O-methyltransferase (pcm) from Pyrococcus furiosus (strain ATCC 43587 / DSM 3638 / JCM 8422 / Vc1).